Here is a 192-residue protein sequence, read N- to C-terminus: Acireductone dioxygenase 2 (192 aa).

Residues H99, H101, E105, and H144 each contribute to the Fe(2+) site. Positions 99, 101, 105, and 144 each coordinate Ni(2+).

The protein belongs to the acireductone dioxygenase (ARD) family. The cofactor is Fe(2+). It depends on Ni(2+) as a cofactor.

The protein localises to the cytoplasm. The protein resides in the nucleus. It catalyses the reaction 1,2-dihydroxy-5-(methylsulfanyl)pent-1-en-3-one + O2 = 4-methylsulfanyl-2-oxobutanoate + formate + 2 H(+). The catalysed reaction is 1,2-dihydroxy-5-(methylsulfanyl)pent-1-en-3-one + O2 = 3-(methylsulfanyl)propanoate + CO + formate + 2 H(+). The protein operates within amino-acid biosynthesis; L-methionine biosynthesis via salvage pathway; L-methionine from S-methyl-5-thio-alpha-D-ribose 1-phosphate: step 5/6. In terms of biological role, catalyzes 2 different reactions between oxygen and the acireductone 1,2-dihydroxy-3-keto-5-methylthiopentene (DHK-MTPene) depending upon the metal bound in the active site. Fe-containing acireductone dioxygenase (Fe-ARD) produces formate and 2-keto-4-methylthiobutyrate (KMTB), the alpha-ketoacid precursor of methionine in the methionine recycle pathway. Ni-containing acireductone dioxygenase (Ni-ARD) produces methylthiopropionate, carbon monoxide and formate, and does not lie on the methionine recycle pathway. The sequence is that of Acireductone dioxygenase 2 (ARD2) from Arabidopsis thaliana (Mouse-ear cress).